The primary structure comprises 154 residues: MDLVQKQKSLQDYTKSLFLEGILDSQFLQLQQLQDESNPDFVSQVVTLFFQDSDRILNDLSLSLDQQVVDFKKVDPHVHQLKGSSSSIGAQRVKNACVVFRSFCEQQNVEACHRCLQQVKQEYYLVKNRLETLFKLEQQIVASGGMIPAVELGF.

Methionine 1 carries the N-acetylmethionine modification. One can recognise an HPt domain in the interval 38 to 143 (NPDFVSQVVT…FKLEQQIVAS (106 aa)). A Phosphohistidine modification is found at histidine 79.

As to quaternary structure, interacts with the B-type response regulators ARR1, ARR2, ARR4 and ARR9. Binds to ETR1, AHK2, AHK3, AHK4, AHK5 and FBR12. Post-translationally, two-component system major event consists of a His-to-Asp phosphorelay between a sensor histidine kinase (HK) and a response regulator (RR). In plants, the His-to-Asp phosphorelay involves an additional intermediate named Histidine-containing phosphotransfer protein (HPt). This multistep phosphorelay consists of a His-Asp-His-Asp sequential transfer of a phosphate group between first a His and an Asp of the HK protein, followed by the transfer to a conserved His of the HPt protein and finally the transfer to an Asp in the receiver domain of the RR protein. As to expression, strongly expressed in roots.

It is found in the cytoplasm. The protein resides in the cytosol. The protein localises to the nucleus. Its function is as follows. Functions as a two-component phosphorelay mediators between cytokinin sensor histidine kinases and response regulator (B-type ARRs). Plays an important role in propagating cytokinin signal transduction through the multistep His-to-Asp phosphorelay. The sequence is that of Histidine-containing phosphotransfer protein 1 (AHP1) from Arabidopsis thaliana (Mouse-ear cress).